Reading from the N-terminus, the 191-residue chain is Transmembrane protein 17B (191 aa).

Helical transmembrane passes span 50–70 (MSLY…VVML), 83–103 (FILI…LYLG), 115–135 (LAGF…FQLF), and 147–167 (GVHI…FVAL).

The protein belongs to the TMEM17 family. Part of the tectonic-like complex (also named B9 complex).

It is found in the cell projection. Its subcellular location is the cilium membrane. Transmembrane component of the tectonic-like complex, a complex localized at the transition zone of primary cilia and acting as a barrier that prevents diffusion of transmembrane proteins between the cilia and plasma membranes. Required for ciliogenesis and sonic hedgehog/SHH signaling. This is Transmembrane protein 17B (Tmem17b) from Danio rerio (Zebrafish).